A 498-amino-acid polypeptide reads, in one-letter code: Myocyte-specific enhancer factor 2A (498 aa).

The 55-residue stretch at 3 to 57 (RKKIQITRIMDERNRQVTFTKRKFGLMKKAYELSVLCDCEIALIIFNSSNKLFQY) folds into the MADS-box domain. Positions 58–86 (ASTDMDKVLLKYTEYNEPHESRTNSDIVE) form a DNA-binding region, mef2-type. A Phosphoserine; by CK2 modification is found at Ser-59. A phosphoserine mark is found at Ser-98 and Ser-108. Phosphothreonine is present on Ser-108. The tract at residues 172-220 (LADSSMLSPPPATLHRNVSPGAPQRPPSTGSASGMLSTTDLTVPNGAGN) is disordered. Residues 198–220 (PSTGSASGMLSTTDLTVPNGAGN) are compositionally biased toward polar residues. Ser-233 carries the post-translational modification Phosphoserine. Residues 240–268 (TGANSLGKVMPTKSPPPPGGGSLGMNSRK) form a disordered region. Residue Lys-247 is modified to N6-acetyllysine. Ser-253 carries the phosphoserine modification. Positions 264–281 (MNSRKPDLRVVIPPSSKG) are required for interaction with MAPKs. The beta domain stretch occupies residues 287–294 (SEEEELEL). Phosphothreonine; by MAPK7 is present on residues Thr-310 and Thr-317. At Thr-310 the chain carries Phosphothreonine; by NLK. A Phosphoserine; by MAPK7 modification is found at Ser-353. Positions 388 to 400 (SNLSINTNQNINI) are enriched in polar residues. The tract at residues 388 to 498 (SNLSINTNQN…KRMRMDTWVT (111 aa)) is disordered. N6-acetyllysine; alternate is present on Lys-401. Lys-401 is covalently cross-linked (Glycyl lysine isopeptide (Lys-Gly) (interchain with G-Cter in SUMO); alternate). Ser-406 is modified (phosphoserine). Thr-413 bears the Phosphothreonine mark. The segment covering 426–436 (QQPPPQPPQPQ) has biased composition (pro residues). At Ser-444 the chain carries Phosphoserine. Low complexity predominate over residues 444–457 (SPVDSLSSSSSSYD). 2 stretches are compositionally biased toward basic and acidic residues: residues 458–468 (GSDREDPRGDF) and 479–498 (NTED…TWVT).

It belongs to the MEF2 family. In terms of assembly, binds DNA as a homo- or heterodimer. Dimerizes with MEF2D. Interacts with HDAC7. Interacts with PIAS1; the interaction enhances sumoylation. Interacts with HDAC4, HDAC9 and SLC2A4RG. Interacts (via the N-terminal) with MAPK7; the interaction results in the phosphorylation and transcriptional activity of MEF2A. In terms of processing, constitutive phosphorylation on Ser-406 promotes Lys-401 sumoylation thus preventing acetylation at this site. Dephosphorylation on Ser-406 by PPP3CA upon neuron depolarization promotes a switch from sumoylation to acetylation on residue Lys-403 leading to inhibition of dendrite claw differentiation. Phosphorylation on Thr-312 and Thr-319 are the main sites involved in p38 MAPK signaling and activate transcription. Phosphorylated on these sites by MAPK14/p38alpha and MAPK11/p38beta, but not by MAPK13/p38delta nor by MAPK12/p38gamma. Phosphorylation on Ser-408 by CDK5 induced by neurotoxicity inhibits MEF2A transcriptional activation leading to apoptosis of cortical neurons. Phosphorylation on Thr-312, Thr-319 and Ser-355 can be induced by EGF. Isoform 3 is phosphorylated on Ser-98 and Thr-108. Post-translationally, sumoylation on Lys-401 is enhanced by PIAS1 and represses transcriptional activity. Phosphorylation on Ser-406 is required for sumoylation. Has no effect on nuclear location nor on DNA binding. Sumoylated with SUMO1 and, to a lesser extent with SUMO2 and SUMO3. PIASx facilitates sumoylation in postsynaptic dendrites in the cerebellar cortex and promotes their morphogenesis. Acetylation on Lys-401 activates transcriptional activity. Acetylated by p300 on several sites in diffentiating myocytes. Acetylation on Lys-4 increases DNA binding and transactivation. Hyperacetylation by p300 leads to enhanced cardiac myocyte growth and heart failure. In terms of processing, proteolytically cleaved in cerebellar granule neurons on several sites by caspase 3 and caspase 7 following neurotoxicity. Preferentially cleaves the CDK5-mediated hyperphosphorylated form which leads to neuron apoptosis and transcriptional inactivation. In terms of tissue distribution, widely expressed though mainly restricted to skeletal and cardiac muscle, brain, neurons and lymphocytes. Differentially expressed depending on if isoforms contain the beta domain or not, with the total expression of the beta domain-lacking isoforms vastly exceeding that of the beta domain-containing isoforms. Isoforms containing the beta domain are expressed primarily in skeletal and cardiac muscle and in brain. Also present in lung and testis. Splicing to include the beta domain is induced in differentiating myocytes. Isoforms lacking the beta domain are expressed less abundantly in skeletal muscle, brain and lymphocytes, and are uniquely found in ovary, liver, spleen and kidney. In embryos, the beta domain-containing and beta domain-lacking isoforms are equally expressed. Also expressed cerebellar granule neurons and other regions of the CNS. Highest levels in the olfactory bulb, cortex, hippocampus, thalamus and cerebellum.

The protein localises to the nucleus. Transcriptional activator which binds specifically to the MEF2 element, 5'-YTA[AT](4)TAR-3', found in numerous muscle-specific genes. Also involved in the activation of numerous growth factor- and stress-induced genes. Mediates cellular functions not only in skeletal and cardiac muscle development, but also in neuronal differentiation and survival. Plays diverse roles in the control of cell growth, survival and apoptosis via p38 MAPK signaling in muscle-specific and/or growth factor-related transcription. In cerebellar granule neurons, phosphorylated and sumoylated MEF2A represses transcription of NUR77 promoting synaptic differentiation. Associates with chromatin to the ZNF16 promoter. This is Myocyte-specific enhancer factor 2A (Mef2a) from Mus musculus (Mouse).